Reading from the N-terminus, the 310-residue chain is tRNA dimethylallyltransferase (310 aa).

10–17 (GPTAVGKS) serves as a coordination point for ATP. 12–17 (TAVGKS) is a binding site for substrate. 3 interaction with substrate tRNA regions span residues 35–38 (DSAQ), 159–163 (QRIQR), and 274–281 (KRQITWLR).

The protein belongs to the IPP transferase family. As to quaternary structure, monomer. It depends on Mg(2+) as a cofactor.

It carries out the reaction adenosine(37) in tRNA + dimethylallyl diphosphate = N(6)-dimethylallyladenosine(37) in tRNA + diphosphate. Its function is as follows. Catalyzes the transfer of a dimethylallyl group onto the adenine at position 37 in tRNAs that read codons beginning with uridine, leading to the formation of N6-(dimethylallyl)adenosine (i(6)A). The polypeptide is tRNA dimethylallyltransferase (Halorhodospira halophila (strain DSM 244 / SL1) (Ectothiorhodospira halophila (strain DSM 244 / SL1))).